The sequence spans 125 residues: Urotensin-2 (125 aa).

Residues 1–20 (MYKLASCCLLFIGFLNPLFS) form the signal peptide. The propeptide occupies 21 to 111 (LPLLDSGEVS…HLLARIRKPY (91 aa)). Cys-119 and Cys-124 form a disulfide bridge.

It belongs to the urotensin-2 family.

It localises to the secreted. Its function is as follows. Highly potent vasoconstrictor. This is Urotensin-2 (UTS2) from Macaca mulatta (Rhesus macaque).